A 388-amino-acid polypeptide reads, in one-letter code: MESYYYVFFIILSIIFIVPNLLKKFNIPAITSIMIAGIIIGPYGLNILQVDETLKILADFGAIMLMFLAGLEVDNETLKQEFKNSLILSLFSLLIPGVGGYLIGQYLGLGFIGSLLYAVIFASHSVAIVYAILEELKMVKTRLGTIILSATIIVDLFTLLLLSVVIKLGIGGENVGTFLLETVLYIGVLLLAIPSLSKNILGVFEKLHAQRIHYVLFIIFIAIIVGEVIGIHPIVGAFICGVAVSEALTKEEHDELLNKNLNAIGYGFFIPIFFLVLGMETNIRVIFNLSNLELLLITLISAVALKFISGFIALRILGFDRIKNTIGGLLTVPKISASLVAASIGRELGLIGNEIFVTIVALSVITATITPIVVKHIFVAKCNKKAKN.

12 helical membrane passes run 2-22 (ESYY…PNLL), 27-47 (IPAI…GLNI), 53-73 (TLKI…GLEV), 81-101 (EFKN…VGGY), 102-122 (LIGQ…VIFA), 146-166 (IILS…SVVI), 175-195 (VGTF…AIPS), 215-235 (VLFI…HPIV), 263-283 (AIGY…ETNI), 294-314 (LLLI…FIAL), 325-345 (TIGG…ASIG), and 354-374 (EIFV…PIVV).

This sequence belongs to the monovalent cation:proton antiporter 1 (CPA1) transporter (TC 2.A.36) family.

Its subcellular location is the cell membrane. In terms of biological role, this is probably a Na(+)/H(+) antiporter. This Methanocaldococcus jannaschii (strain ATCC 43067 / DSM 2661 / JAL-1 / JCM 10045 / NBRC 100440) (Methanococcus jannaschii) protein is Probable Na(+)/H(+) antiporter 3.